The sequence spans 452 residues: NADH-ubiquinone oxidoreductase chain 4 (452 aa).

14 consecutive transmembrane segments (helical) span residues 7-27, 57-77, 95-115, 116-136, 145-165, 186-206, 218-238, 251-271, 278-298, 303-323, 336-356, 360-380, 386-406, and 428-448; these read VLMS…IIAL, MMSF…ILAS, VILL…MFYI, WFEA…YQPE, MIYT…IFIV, MALA…MFTV, PIAG…YGIL, TSSL…LICL, SLIA…ALMS, FQAA…LFVM, LFLM…WFLF, NMAA…TSIL, AFIL…YMYT, and LTLM…PELI.

The protein belongs to the complex I subunit 4 family.

Its subcellular location is the mitochondrion membrane. The enzyme catalyses a ubiquinone + NADH + 5 H(+)(in) = a ubiquinol + NAD(+) + 4 H(+)(out). Core subunit of the mitochondrial membrane respiratory chain NADH dehydrogenase (Complex I) that is believed to belong to the minimal assembly required for catalysis. Complex I functions in the transfer of electrons from NADH to the respiratory chain. The immediate electron acceptor for the enzyme is believed to be ubiquinone. The sequence is that of NADH-ubiquinone oxidoreductase chain 4 (ND4) from Lumbricus terrestris (Common earthworm).